A 459-amino-acid polypeptide reads, in one-letter code: ATP-dependent protease ATPase subunit HslU (459 aa).

Residues valine 26, 68–73 (GVGKTE), aspartate 271, glutamate 337, and arginine 409 each bind ATP.

It belongs to the ClpX chaperone family. HslU subfamily. In terms of assembly, a double ring-shaped homohexamer of HslV is capped on each side by a ring-shaped HslU homohexamer. The assembly of the HslU/HslV complex is dependent on binding of ATP.

Its subcellular location is the cytoplasm. Functionally, ATPase subunit of a proteasome-like degradation complex; this subunit has chaperone activity. The binding of ATP and its subsequent hydrolysis by HslU are essential for unfolding of protein substrates subsequently hydrolyzed by HslV. HslU recognizes the N-terminal part of its protein substrates and unfolds these before they are guided to HslV for hydrolysis. This Xylella fastidiosa (strain 9a5c) protein is ATP-dependent protease ATPase subunit HslU.